We begin with the raw amino-acid sequence, 457 residues long: Multidrug resistance protein MdtK (457 aa).

The Cytoplasmic portion of the chain corresponds to 1–10; sequence MQKYISEARL. The chain crosses the membrane as a helical span at residues 11 to 31; it reads LLALAIPVILAQIAQTAMGFV. The Periplasmic segment spans residues 32 to 52; it reads DTVMAGGYSATDMAAVAIGTS. The chain crosses the membrane as a helical span at residues 53–73; sequence IWLPAILFGHGLLLALTPVIA. Residues 74-92 are Cytoplasmic-facing; the sequence is QLNGSGRRERIAHQVRQGF. The helical transmembrane segment at 93 to 113 threads the bilayer; sequence WLAGFVSVLIMLVLWNAGYII. Over 114–126 the chain is Periplasmic; that stretch reads RYMENIDPALADK. A helical transmembrane segment spans residues 127–147; sequence AVGYLRALLWGAPGYLFFQVA. Over 148–159 the chain is Cytoplasmic; that stretch reads RNQCEGLAKAKP. The helical transmembrane segment at 160–180 threads the bilayer; it reads GMVMGFIGLLVNIPVNYIFIY. At 181 to 188 the chain is on the periplasmic side; sequence GHFGMPEL. The helical transmembrane segment at 189–209 threads the bilayer; sequence GGVGCGVATAAVYWVMFLAMV. At 210 to 242 the chain is on the cytoplasmic side; sequence SYIKRARSMRDIRNEKGTAKPEPAVMKRLIQLG. Residues 243-263 form a helical membrane-spanning segment; that stretch reads LPIALALFLEVTLFAVVALLV. Residues 264 to 275 are Periplasmic-facing; the sequence is SPLGIVDVAGHQ. A helical transmembrane segment spans residues 276 to 296; that stretch reads IALNFSSLMFVLPMSLAAAVT. The Cytoplasmic portion of the chain corresponds to 297–313; the sequence is IRVGYRLGQGSTLDAQT. The chain crosses the membrane as a helical span at residues 314 to 334; sequence AARTGLMVGVCMATLTAIFTV. Topologically, residues 335–349 are periplasmic; it reads SLREQIALLYNDNPE. A helical transmembrane segment spans residues 350 to 370; sequence VVTLAAHLMLLAAVYQISDSI. At 371 to 386 the chain is on the cytoplasmic side; that stretch reads QVIGSGILRGYKDTRS. Residues 387-407 form a helical membrane-spanning segment; the sequence is IFYITFTAYWVLGLPSGYILA. Residues 408 to 417 lie on the Periplasmic side of the membrane; it reads LTDLVVEPMG. Residues 418–438 form a helical membrane-spanning segment; the sequence is PAGFWIGFIIGLTSAAIMMML. Over 439-457 the chain is Cytoplasmic; that stretch reads RMRFLQRMPSAIILQRASR.

It belongs to the multi antimicrobial extrusion (MATE) (TC 2.A.66.1) family. MdtK subfamily.

It localises to the cell inner membrane. Multidrug efflux pump that functions probably as a Na(+)/drug antiporter. This chain is Multidrug resistance protein MdtK, found in Shigella flexneri serotype 5b (strain 8401).